We begin with the raw amino-acid sequence, 570 residues long: Protein translocase subunit SecD (570 aa).

A compositionally biased stretch (polar residues) spans 104–117 (GANATGTPSASETG). Residues 104 to 198 (GANATGTPSA…SASASGDDAT (95 aa)) are disordered. Positions 122–146 (KATDKATDKATDKATDGDKATDGDK) are enriched in basic and acidic residues. 2 stretches are compositionally biased toward low complexity: residues 147–161 (ASGT…SATS) and 172–196 (ADPS…SGDD). Transmembrane regions (helical) follow at residues 370–390 (AGLI…LFYY), 395–415 (FIAV…MALL), 419–439 (IGFA…GITA), 474–494 (ILVS…VTVG), and 498–518 (GFAF…FLFT). Positions 540–570 (LDPKALGAKPPLRRTRRPSRPAAGPVDPKEA) are disordered.

It belongs to the SecD/SecF family. SecD subfamily. Forms a complex with SecF. Part of the essential Sec protein translocation apparatus which comprises SecA, SecYEG and auxiliary proteins SecDF. Other proteins may also be involved.

The protein resides in the cell membrane. In terms of biological role, part of the Sec protein translocase complex. Interacts with the SecYEG preprotein conducting channel. SecDF uses the proton motive force (PMF) to complete protein translocation after the ATP-dependent function of SecA. This chain is Protein translocase subunit SecD, found in Streptomyces coelicolor (strain ATCC BAA-471 / A3(2) / M145).